We begin with the raw amino-acid sequence, 375 residues long: o-succinylbenzoate synthase (375 aa).

Lys-166 (proton donor) is an active-site residue. Mg(2+)-binding residues include Asp-191, Glu-216, and Asp-241. The Proton acceptor role is filled by Lys-265.

This sequence belongs to the mandelate racemase/muconate lactonizing enzyme family. MenC type 2 subfamily. In terms of assembly, homotetramer. Requires a divalent metal cation as cofactor.

It carries out the reaction (1R,6R)-6-hydroxy-2-succinyl-cyclohexa-2,4-diene-1-carboxylate = 2-succinylbenzoate + H2O. The catalysed reaction is N-acetyl-D-methionine = N-acetyl-L-methionine. The enzyme catalyses N-acetyl-D-phenylalanine = N-acetyl-L-phenylalanine. The protein operates within quinol/quinone metabolism; 1,4-dihydroxy-2-naphthoate biosynthesis; 1,4-dihydroxy-2-naphthoate from chorismate: step 4/7. Its pathway is quinol/quinone metabolism; menaquinone biosynthesis. In terms of biological role, converts 2-succinyl-6-hydroxy-2,4-cyclohexadiene-1-carboxylate (SHCHC) to 2-succinylbenzoate (OSB). Also acts as a N-succinylamino acid racemase (NSAR) that catalyzes the racemization of various N-succinylamino acids, including N-succinyl-alanine and N-succinyl-phenylalanine. Can catalyze the racemization of a broad range of N-acylamino acids, including N-acetyl-methionine, N-acetyl-phenylalanine, N-carbamoyl-methionine, N-formyl-D-methionine, N-formyl-D-norleucine and N-carbamoyl-D-norleucine. May be a bifunctional enzyme involved in menaquinone biosynthesis and in an irreversible pathway for the conversion of D- to L-amino acids, thereby facilitating the survival and/or growth of the organism. The protein is o-succinylbenzoate synthase of Geobacillus kaustophilus.